Consider the following 148-residue polypeptide: Large ribosomal subunit protein uL15 (148 aa).

Over residues 1-30 the composition is skewed to basic residues; that stretch reads MPSRLRKTRKLRGHVSHGHGRIGKHRKHPG. Residues 1–37 form a disordered region; the sequence is MPSRLRKTRKLRGHVSHGHGRIGKHRKHPGGRGNAGG. A (3S)-3-hydroxyhistidine modification is found at His39. N6-acetyllysine occurs at positions 47 and 55. Phosphoserine is present on Ser68. Lys110 carries the post-translational modification N6-acetyllysine.

The protein belongs to the universal ribosomal protein uL15 family. In terms of assembly, component of the large ribosomal subunit. In terms of processing, hydroxylated on His-39 by MINA.

The protein resides in the cytoplasm. In terms of biological role, component of the large ribosomal subunit. The ribosome is a large ribonucleoprotein complex responsible for the synthesis of proteins in the cell. In Mus musculus (Mouse), this protein is Large ribosomal subunit protein uL15 (Rpl27a).